Consider the following 279-residue polypeptide: Thymidylate synthase (279 aa).

Residue 141–142 (RR) participates in dUMP binding. The Nucleophile role is filled by cysteine 161. DUMP contacts are provided by residues 181–184 (RSND), asparagine 192, and 222–224 (HVY). Aspartate 184 lines the (6R)-5,10-methylene-5,6,7,8-tetrahydrofolate pocket. Residue alanine 278 coordinates (6R)-5,10-methylene-5,6,7,8-tetrahydrofolate.

It belongs to the thymidylate synthase family. Bacterial-type ThyA subfamily. Homodimer.

Its subcellular location is the cytoplasm. The catalysed reaction is dUMP + (6R)-5,10-methylene-5,6,7,8-tetrahydrofolate = 7,8-dihydrofolate + dTMP. It participates in pyrimidine metabolism; dTTP biosynthesis. In terms of biological role, catalyzes the reductive methylation of 2'-deoxyuridine-5'-monophosphate (dUMP) to 2'-deoxythymidine-5'-monophosphate (dTMP) while utilizing 5,10-methylenetetrahydrofolate (mTHF) as the methyl donor and reductant in the reaction, yielding dihydrofolate (DHF) as a by-product. This enzymatic reaction provides an intracellular de novo source of dTMP, an essential precursor for DNA biosynthesis. This is Thymidylate synthase from Bacillus mojavensis.